The chain runs to 410 residues: Peptidase T (410 aa).

Histidine 79 is a binding site for Zn(2+). The active site involves aspartate 81. Zn(2+) is bound at residue aspartate 142. The active-site Proton acceptor is the glutamate 176. The Zn(2+) site is built by glutamate 177, aspartate 199, and histidine 381.

Belongs to the peptidase M20B family. Requires Zn(2+) as cofactor.

The protein resides in the cytoplasm. It carries out the reaction Release of the N-terminal residue from a tripeptide.. Functionally, cleaves the N-terminal amino acid of tripeptides. This is Peptidase T from Listeria monocytogenes serotype 4b (strain CLIP80459).